The primary structure comprises 438 residues: UDP-N-acetylmuramoylalanine--D-glutamate ligase (438 aa).

Position 112 to 118 (112 to 118 (GSNGKST)) interacts with ATP.

This sequence belongs to the MurCDEF family.

It is found in the cytoplasm. It carries out the reaction UDP-N-acetyl-alpha-D-muramoyl-L-alanine + D-glutamate + ATP = UDP-N-acetyl-alpha-D-muramoyl-L-alanyl-D-glutamate + ADP + phosphate + H(+). It participates in cell wall biogenesis; peptidoglycan biosynthesis. Cell wall formation. Catalyzes the addition of glutamate to the nucleotide precursor UDP-N-acetylmuramoyl-L-alanine (UMA). This Shigella sonnei (strain Ss046) protein is UDP-N-acetylmuramoylalanine--D-glutamate ligase.